An 877-amino-acid polypeptide reads, in one-letter code: Leucine--tRNA ligase (877 aa).

The 'HIGH' region signature appears at 43-53 (PYPSGRIHMGH). The 'KMSKS' region motif lies at 628–632 (KMSKS). K631 contacts ATP.

Belongs to the class-I aminoacyl-tRNA synthetase family.

The protein localises to the cytoplasm. The catalysed reaction is tRNA(Leu) + L-leucine + ATP = L-leucyl-tRNA(Leu) + AMP + diphosphate. The protein is Leucine--tRNA ligase of Brucella anthropi (strain ATCC 49188 / DSM 6882 / CCUG 24695 / JCM 21032 / LMG 3331 / NBRC 15819 / NCTC 12168 / Alc 37) (Ochrobactrum anthropi).